Here is a 184-residue protein sequence, read N- to C-terminus: ATP synthase subunit b, chloroplastic (184 aa).

The chain crosses the membrane as a helical span at residues 27–49 (LATNPINLSVVLGVLIFFGKGVL).

Belongs to the ATPase B chain family. F-type ATPases have 2 components, F(1) - the catalytic core - and F(0) - the membrane proton channel. F(1) has five subunits: alpha(3), beta(3), gamma(1), delta(1), epsilon(1). F(0) has four main subunits: a(1), b(1), b'(1) and c(10-14). The alpha and beta chains form an alternating ring which encloses part of the gamma chain. F(1) is attached to F(0) by a central stalk formed by the gamma and epsilon chains, while a peripheral stalk is formed by the delta, b and b' chains.

Its subcellular location is the plastid. It is found in the chloroplast thylakoid membrane. F(1)F(0) ATP synthase produces ATP from ADP in the presence of a proton or sodium gradient. F-type ATPases consist of two structural domains, F(1) containing the extramembraneous catalytic core and F(0) containing the membrane proton channel, linked together by a central stalk and a peripheral stalk. During catalysis, ATP synthesis in the catalytic domain of F(1) is coupled via a rotary mechanism of the central stalk subunits to proton translocation. Its function is as follows. Component of the F(0) channel, it forms part of the peripheral stalk, linking F(1) to F(0). The chain is ATP synthase subunit b, chloroplastic from Platanus occidentalis (Sycamore).